Consider the following 143-residue polypeptide: uncharacterized protein (143 aa).

A Rhodanese domain is found at 50 to 143 (NKEDAVVVDL…GENLPLVRGK (94 aa)). Residue Lys-91 is modified to N6-acetyllysine.

This is an uncharacterized protein from Escherichia coli O6:H1 (strain CFT073 / ATCC 700928 / UPEC).